The chain runs to 171 residues: 16S rRNA aminocarboxypropyltransferase (171 aa).

Residues threonine 17, leucine 67, leucine 90, and threonine 109 each contribute to the S-adenosyl-L-methionine site.

The protein belongs to the TDD superfamily. TSR3 family.

The protein localises to the cytoplasm. It carries out the reaction an N(1)-methylpseudouridine in rRNA + S-adenosyl-L-methionine = N(1)-methyl-N(3)-[(3S)-3-amino-3-carboxypropyl]pseudouridine in rRNA + S-methyl-5'-thioadenosine + H(+). In terms of biological role, aminocarboxypropyltransferase that catalyzes the aminocarboxypropyl transfer on pseudouridine corresponding to position 914 in M.jannaschii 16S rRNA. It constitutes the last step in biosynthesis of the hypermodified N1-methyl-N3-(3-amino-3-carboxypropyl) pseudouridine (m1acp3-Psi). This Methanobrevibacter smithii (strain ATCC 35061 / DSM 861 / OCM 144 / PS) protein is 16S rRNA aminocarboxypropyltransferase.